The sequence spans 463 residues: Glycine--tRNA ligase (463 aa).

Residues Arg100 and Glu175 each coordinate substrate. ATP-binding positions include 207 to 209 (RNE), 217 to 222 (FRTREF), 291 to 292 (EL), and 335 to 338 (GADR). Residue 222-226 (FEQME) participates in substrate binding. Substrate is bound at residue 331 to 335 (EPSVG).

It belongs to the class-II aminoacyl-tRNA synthetase family. As to quaternary structure, homodimer.

Its subcellular location is the cytoplasm. The enzyme catalyses tRNA(Gly) + glycine + ATP = glycyl-tRNA(Gly) + AMP + diphosphate. Functionally, catalyzes the attachment of glycine to tRNA(Gly). In Clostridium kluyveri (strain NBRC 12016), this protein is Glycine--tRNA ligase.